Consider the following 449-residue polypeptide: Metacaspase-1 (449 aa).

Positions M1–S132 are disordered. Residues Y10–P26 are compositionally biased toward low complexity. Residues P27 to Q55 are compositionally biased toward pro residues. The segment covering N56–T66 has biased composition (polar residues). Low complexity-rich tracts occupy residues Q67–P91 and Q98–P112. Over residues G119–S132 the composition is skewed to polar residues. Residues H232 and C293 contribute to the active site.

It belongs to the peptidase C14B family.

In terms of biological role, involved in cell death (apoptosis). The sequence is that of Metacaspase-1 (MCA1) from Lodderomyces elongisporus (strain ATCC 11503 / CBS 2605 / JCM 1781 / NBRC 1676 / NRRL YB-4239) (Yeast).